The primary structure comprises 338 residues: Transcription factor AP-4 (338 aa).

The bHLH domain occupies 48 to 99 (IRREIANSNERRRMQSINAGFQSLKTLIPHTDGEKLSKAAILQQTAEYIFSL). The leucine-zipper 1 stretch occupies residues 100–120 (EQEKTRLLQQNTQLKRFIQEL). The tract at residues 118 to 141 (QELSGSSPKRRRAEDKDEGIGSPD) is disordered. Residues Ser123, Ser124, and Ser139 each carry the phosphoserine modification. Residue Lys147 forms a Glycyl lysine isopeptide (Lys-Gly) (interchain with G-Cter in SUMO2) linkage. The segment at 151–179 (LRREMIELRQQLDKERSVRMMLEEQVRSL) is leucine-zipper 2. Glycyl lysine isopeptide (Lys-Gly) (interchain with G-Cter in SUMO2) cross-links involve residues Lys187, Lys189, and Lys285. The segment covering 283-294 (QEKQELEEEQRR) has biased composition (basic and acidic residues). Positions 283-338 (QEKQELEEEQRRAVIVKPVRSCPEAPTSDTASDSEASDSDAMDQSREEPSGDGELP) are disordered.

In terms of assembly, efficient DNA binding requires dimerization with another bHLH protein. Homodimer.

It is found in the nucleus. Functionally, transcription factor that activates both viral and cellular genes by binding to the symmetrical DNA sequence 5'-CAGCTG-3'. The polypeptide is Transcription factor AP-4 (TFAP4) (Homo sapiens (Human)).